Reading from the N-terminus, the 449-residue chain is Maltoporin (449 aa).

The N-terminal stretch at 1–24 is a signal peptide; it reads MITLRKLPLAVAVAAGVMSAQAMA.

It belongs to the porin LamB (TC 1.B.3) family. In terms of assembly, homotrimer formed of three 18-stranded antiparallel beta-barrels, containing three independent channels.

The protein resides in the cell outer membrane. It catalyses the reaction beta-maltose(in) = beta-maltose(out). Its function is as follows. Involved in the transport of maltose and maltodextrins. The polypeptide is Maltoporin (Citrobacter koseri (strain ATCC BAA-895 / CDC 4225-83 / SGSC4696)).